Here is a 969-residue protein sequence, read N- to C-terminus: Defective in germ line development protein 3 (969 aa).

Positions 34-81 are gld-2-binding; sequence MAENAASARKLFVSSALKDIIVNPENFYHDFQQSAQMAEDANQRRQVS. 5 KH domains span residues 34–109, 113–187, 189–259, 270–342, and 344–419; these read MAEN…MIEI, RVTL…MRRN, HFTV…NEIL, FTLH…IMDL, and PISM…YQKV. Residues 57–471 form a gls-1-binding region; it reads PENFYHDFQQ…GSNGRRHRSS (415 aa). Disordered stretches follow at residues 459-508 and 602-711; these read LSDG…SFSE and EQHR…GDIH. The span at 487–508 shows a compositional bias: polar residues; the sequence is KQFSESSGGPSRSHTRVSSFSE. Low complexity predominate over residues 631–644; it reads PSSSTGSYYPSTTP. The span at 647–659 shows a compositional bias: basic and acidic residues; it reads RVYEQVREDDLRS. A compositionally biased stretch (polar residues) spans 664 to 676; that stretch reads RRTSVNGDDQNVE. Composition is skewed to basic and acidic residues over residues 677-687 and 694-711; these read SMHDQGYERQY and LQKD…GDIH. The tract at residues 769–969 is gls-1-binding; that stretch reads LYMHESPHND…DLSLDETSTY (201 aa). Positions 860–949 are fbf-1-binding; sequence NGVTKTILEP…VLNEKEKEIA (90 aa). Positions 950-969 are disordered; it reads DKSIESTVTQDLSLDETSTY. Residues 954-969 are compositionally biased toward polar residues; the sequence is ESTVTQDLSLDETSTY.

In terms of assembly, interacts (via its KH1 domain) with gld-2. Isoform A but not isoform B interacts specifically with fbf-1 and fbf-2 in an RNA-independent manner. Isoform A interacts with gls-1 isoform C. As to expression, expressed in the germline (at protein level). In adult hermaphrodites, first detected in the transition zone (TZ), weakly expressed in the early mitotic region and in pachytene germ cells, and becomes more abundantly expressed as germ cells enter diakinesis (at protein level). Expressed in primary spermatocytes, but not in secondary spermatocytes or adult sperm (at protein level).

The protein resides in the cytoplasm. It localises to the cytoplasmic granule. Its subcellular location is the perinuclear region. Its function is as follows. Required maternally for germline survival and embryogenesis. Forms a complex with gls-1 which promotes the oogenic cell fate by freeing the translational repressor fbf to repress sperm promoting factors. Promotes maturation of primary spermatocytes to mature sperm. Required during hermaphrodite development to promote sperm fate, which is critical for determining the normal number of sperm. Promotion of sperm fate is at the expense of oogenesis, possibly through the negative regulation of fbf. Required during male development for the continued production of sperm and inhibition of oogenesis. Together with gld-2, promotes the transition from mitosis to meiosis. Required for polyadenylation of neg-1 mRNA during embryogenesis. This chain is Defective in germ line development protein 3, found in Caenorhabditis elegans.